A 484-amino-acid polypeptide reads, in one-letter code: MKLIVKVFPEITIKSPPVRKKFIRQLGKNIRTVLRELDADIVVGGVWDNLEVETRLTDPKVLQGIRDRLSCMPGIANFLQVAEYPLGDMDDVVAKCKLHYADLLPGTMFSVRCKRAGRHDFSSMDVEKYVGSQLRMQCGAAGIELKKPDLVVRMEIRDQRLFVVHDQHKGMGGYPLGALEQTLVLMSGGFDSTVAAYQIMRRGLMAHFCFFNLGGRAHELGVMEVAHFIWKKYGSSQRVLFVSVPFEEVLGEILQKVDNSHMGVVLKRMMLRAASAVADRLEIDVLVTGEAISQVASQTLPNLSLIDAATDKLVLRPLVATHKQDIVDLATEIGTADFARHMPEYCGVISVNPKTNAKRNRVEYEEQQFDMAILEQALERAKLVSIDRVIDDLSRNIDIEEVSQALAGQVIIDIRHPDAQEDQPLQVPGVEIQTLPFYALNSRFKALDDTRQYLLYCDKGVMSRLHAHHLLSEGHANVRVYRPS.

In terms of domain architecture, THUMP spans 63–167 (QGIRDRLSCM…DQRLFVVHDQ (105 aa)). ATP-binding positions include 185–186 (LM), K267, G289, and Q298. C346 and C457 form a disulfide bridge. The 79-residue stretch at 405 to 483 (ALAGQVIIDI…GHANVRVYRP (79 aa)) folds into the Rhodanese domain. C457 acts as the Cysteine persulfide intermediate in catalysis.

The protein belongs to the ThiI family.

The protein resides in the cytoplasm. It catalyses the reaction [ThiI sulfur-carrier protein]-S-sulfanyl-L-cysteine + a uridine in tRNA + 2 reduced [2Fe-2S]-[ferredoxin] + ATP + H(+) = [ThiI sulfur-carrier protein]-L-cysteine + a 4-thiouridine in tRNA + 2 oxidized [2Fe-2S]-[ferredoxin] + AMP + diphosphate. The enzyme catalyses [ThiS sulfur-carrier protein]-C-terminal Gly-Gly-AMP + S-sulfanyl-L-cysteinyl-[cysteine desulfurase] + AH2 = [ThiS sulfur-carrier protein]-C-terminal-Gly-aminoethanethioate + L-cysteinyl-[cysteine desulfurase] + A + AMP + 2 H(+). Its pathway is cofactor biosynthesis; thiamine diphosphate biosynthesis. Functionally, catalyzes the ATP-dependent transfer of a sulfur to tRNA to produce 4-thiouridine in position 8 of tRNAs, which functions as a near-UV photosensor. Also catalyzes the transfer of sulfur to the sulfur carrier protein ThiS, forming ThiS-thiocarboxylate. This is a step in the synthesis of thiazole, in the thiamine biosynthesis pathway. The sulfur is donated as persulfide by IscS. In Pseudomonas syringae pv. tomato (strain ATCC BAA-871 / DC3000), this protein is tRNA sulfurtransferase.